The following is a 124-amino-acid chain: Ribonuclease pancreatic (124 aa).

Over residues 1 to 13 (KESAAAKFERQHM) the composition is skewed to basic and acidic residues. Positions 1–24 (KESAAAKFERQHMDSSTSSASSSN) are disordered. 2 residues coordinate substrate: Lys7 and Arg10. Residue His12 is the Proton acceptor of the active site. Disulfide bonds link Cys26–Cys84, Cys40–Cys95, Cys58–Cys110, and Cys65–Cys72. Asn34 carries an N-linked (GlcNAc...) asparagine; partial glycan. Substrate-binding positions include 41-45 (KPVNT), Lys66, and Arg85. His119 functions as the Proton donor in the catalytic mechanism.

It belongs to the pancreatic ribonuclease family. In terms of assembly, monomer. Interacts with and forms tight 1:1 complexes with RNH1. Dimerization of two such complexes may occur. Interaction with RNH1 inhibits this protein. As to expression, pancreas.

It is found in the secreted. It catalyses the reaction an [RNA] containing cytidine + H2O = an [RNA]-3'-cytidine-3'-phosphate + a 5'-hydroxy-ribonucleotide-3'-[RNA].. It carries out the reaction an [RNA] containing uridine + H2O = an [RNA]-3'-uridine-3'-phosphate + a 5'-hydroxy-ribonucleotide-3'-[RNA].. In terms of biological role, endonuclease that catalyzes the cleavage of RNA on the 3' side of pyrimidine nucleotides. Acts on single-stranded and double-stranded RNA. This is Ribonuclease pancreatic (RNASE1) from Ovis aries (Sheep).